We begin with the raw amino-acid sequence, 196 residues long: MVKIGVLGLQGAVREHVKSVEASGAEAVVVKRIEQLEEIDGLILPGGESTTMRRLIDKYDFMEPLRTFAKSGKPMFGTCAGMILLAKTLIGYDEAHIGAMDITVERNAFGRQKDSFEAALSIKGVGEDFVGVFIRAPYVVNVADDVEVLSTHGDRMVAVRQGPFLAASFHPELTDDHRVTAYFVEMVKEAKMKKVV.

Residue 47 to 49 coordinates L-glutamine; sequence GES. C79 serves as the catalytic Nucleophile. L-glutamine contacts are provided by residues R106 and 134–135; that span reads IR. Residues H170 and E172 each act as charge relay system in the active site.

This sequence belongs to the glutaminase PdxT/SNO family. In the presence of PdxS, forms a dodecamer of heterodimers. Only shows activity in the heterodimer.

It catalyses the reaction aldehydo-D-ribose 5-phosphate + D-glyceraldehyde 3-phosphate + L-glutamine = pyridoxal 5'-phosphate + L-glutamate + phosphate + 3 H2O + H(+). The enzyme catalyses L-glutamine + H2O = L-glutamate + NH4(+). It functions in the pathway cofactor biosynthesis; pyridoxal 5'-phosphate biosynthesis. Catalyzes the hydrolysis of glutamine to glutamate and ammonia as part of the biosynthesis of pyridoxal 5'-phosphate. The resulting ammonia molecule is channeled to the active site of PdxS. The chain is Pyridoxal 5'-phosphate synthase subunit PdxT from Bacillus cereus (strain ZK / E33L).